The chain runs to 206 residues: Small ribosomal subunit protein uS4 (206 aa).

A disordered region spans residues 29–52; the sequence is LDKRPYAPGQHGQRRGRGRPSDYS. The S4 RNA-binding domain occupies 96-171; the sequence is RRLDNVVFRM…QKRRRVSPWV (76 aa).

The protein belongs to the universal ribosomal protein uS4 family. As to quaternary structure, part of the 30S ribosomal subunit. Contacts protein S5. The interaction surface between S4 and S5 is involved in control of translational fidelity.

One of the primary rRNA binding proteins, it binds directly to 16S rRNA where it nucleates assembly of the body of the 30S subunit. In terms of biological role, with S5 and S12 plays an important role in translational accuracy. The sequence is that of Small ribosomal subunit protein uS4 from Deinococcus deserti (strain DSM 17065 / CIP 109153 / LMG 22923 / VCD115).